We begin with the raw amino-acid sequence, 339 residues long: Zinc metalloprotease MJ0392 (339 aa).

2 helical membrane-spanning segments follow: residues 10–30 (IMGI…VIIG) and 33–53 (IMNN…SVVL). H54 serves as a coordination point for Zn(2+). Residue E55 is part of the active site. Residue H58 coordinates Zn(2+). 2 helical membrane passes run 96 to 116 (IAGP…SQFF) and 125 to 145 (LLYT…IPAF). Position 148 (D148) interacts with Zn(2+). 2 helical membrane-spanning segments follow: residues 180 to 200 (IMLL…SLFV) and 251 to 271 (YFGY…IGNI). CBS domains are found at residues 226–281 (MTPN…VRDY) and 281–335 (YMEK…ELKE).

The protein belongs to the peptidase M50B family. As to quaternary structure, monomer. Zn(2+) serves as cofactor.

It is found in the cell membrane. With respect to regulation, inhibited by 1,10-phenanthroline. A site-2 regulated intramembrane protease (S2P) that cleaves type-2 transmembrane proteins within their membrane-spanning domains; its endogenous substrate is unknown. Regulated intramembrane proteolysis (RIP) occurs when an extracytoplasmic signal triggers a concerted proteolytic cascade to transmit information and elicit cellular responses. A membrane-spanning regulatory substrate protein is first cut extracytoplasmically (site-1 protease, S1P), then within the membrane itself (site-2 protease, S2P, this enzyme), while cytoplasmic proteases finish degrading the regulatory protein, liberating the effector protein. Possible signals, S1P and substrates are unknown in this organism. The chain is Zinc metalloprotease MJ0392 from Methanocaldococcus jannaschii (strain ATCC 43067 / DSM 2661 / JAL-1 / JCM 10045 / NBRC 100440) (Methanococcus jannaschii).